A 589-amino-acid polypeptide reads, in one-letter code: 2-succinyl-5-enolpyruvyl-6-hydroxy-3-cyclohexene-1-carboxylate synthase (589 aa).

This sequence belongs to the TPP enzyme family. MenD subfamily. Homodimer. Requires Mg(2+) as cofactor. It depends on Mn(2+) as a cofactor. Thiamine diphosphate is required as a cofactor.

It carries out the reaction isochorismate + 2-oxoglutarate + H(+) = 5-enolpyruvoyl-6-hydroxy-2-succinyl-cyclohex-3-ene-1-carboxylate + CO2. It participates in quinol/quinone metabolism; 1,4-dihydroxy-2-naphthoate biosynthesis; 1,4-dihydroxy-2-naphthoate from chorismate: step 2/7. It functions in the pathway quinol/quinone metabolism; menaquinone biosynthesis. Its function is as follows. Catalyzes the thiamine diphosphate-dependent decarboxylation of 2-oxoglutarate and the subsequent addition of the resulting succinic semialdehyde-thiamine pyrophosphate anion to isochorismate to yield 2-succinyl-5-enolpyruvyl-6-hydroxy-3-cyclohexene-1-carboxylate (SEPHCHC). The protein is 2-succinyl-5-enolpyruvyl-6-hydroxy-3-cyclohexene-1-carboxylate synthase of Myxococcus xanthus (strain DK1622).